A 338-amino-acid chain; its full sequence is Glyceraldehyde-3-phosphate dehydrogenase (338 aa).

NAD(+) contacts are provided by residues 11–12 (TI) and Gly111. A D-glyceraldehyde 3-phosphate-binding site is contributed by 140–142 (SCN). Residue Cys141 is the Nucleophile of the active site. Arg169 is an NAD(+) binding site. The tract at residues 170 to 195 (GSDPSEVKKGPINSIVPNPPKVPSHH) is disordered. 195–196 (HG) serves as a coordination point for D-glyceraldehyde 3-phosphate. Gln302 contributes to the NAD(+) binding site.

It belongs to the glyceraldehyde-3-phosphate dehydrogenase family. As to quaternary structure, homotetramer.

It localises to the cytoplasm. It catalyses the reaction D-glyceraldehyde 3-phosphate + phosphate + NADP(+) = (2R)-3-phospho-glyceroyl phosphate + NADPH + H(+). The enzyme catalyses D-glyceraldehyde 3-phosphate + phosphate + NAD(+) = (2R)-3-phospho-glyceroyl phosphate + NADH + H(+). It functions in the pathway carbohydrate degradation; glycolysis; pyruvate from D-glyceraldehyde 3-phosphate: step 1/5. The chain is Glyceraldehyde-3-phosphate dehydrogenase from Methanobrevibacter smithii (strain ATCC 35061 / DSM 861 / OCM 144 / PS).